The following is a 464-amino-acid chain: Flavin-containing monooxygenase FMO GS-OX-like 7 (464 aa).

18-23 (GAGAAG) serves as a coordination point for FAD. 214–219 (GSSVSG) serves as a coordination point for NADP(+).

It belongs to the FMO family. It depends on FAD as a cofactor.

Catalyzes the conversion of methylthioalkyl glucosinolates of any chain length into methylsulfinylalkyl glucosinolates. The sequence is that of Flavin-containing monooxygenase FMO GS-OX-like 7 from Arabidopsis thaliana (Mouse-ear cress).